We begin with the raw amino-acid sequence, 315 residues long: Leucine-rich repeat-containing protein 75B (315 aa).

Residues 1 to 23 (MGARLGRRAGPEAGSEAGAAAGC) are disordered. A compositionally biased stretch (low complexity) spans 11–23 (PEAGSEAGAAAGC). LRR repeat units lie at residues 182–195 (LAVL…LSDE) and 207–220 (LPRL…GNRL). The segment at 284-315 (PEGSAAGATTPASTWDSTAAGLGPEPQACCAR) is disordered. Residues 286–297 (GSAAGATTPAST) are compositionally biased toward low complexity.

The protein belongs to the LRRC75 family.

In terms of biological role, may suppress myogenic differentiation by modulating MYOG expression and Erk1/2 signaling. This chain is Leucine-rich repeat-containing protein 75B, found in Homo sapiens (Human).